Reading from the N-terminus, the 886-residue chain is Desmocollin-1 (886 aa).

The first 29 residues, 1 to 29, serve as a signal peptide directing secretion; it reads MAVACAAPGSTFSKQLLFFLLVLVLFCDA. A propeptide spanning residues 30 to 134 is cleaved from the precursor; it reads CQKVSLHVPS…KEPVHNRSKR (105 aa). N-linked (GlcNAc...) asparagine glycans are attached at residues Asn-130 and Asn-165. Cadherin domains lie at 135–242, 243–354, 355–471, 472–575, and 576–682; these read RWAP…APYF, ETKL…SPYF, TQTS…GPEC, QPPV…DHPP, and QIDK…EERD. Residues 135 to 691 lie on the Extracellular side of the membrane; that stretch reads RWAPIPCSLM…DAKPNIILGK (557 aa). Residue Thr-385 is modified to Phosphothreonine. N-linked (GlcNAc...) (high mannose) asparagine glycosylation is present at Asn-546. Asn-613 is a glycosylation site (N-linked (GlcNAc...) asparagine). Residues 692–714 traverse the membrane as a helical segment; that stretch reads WAILAMVLGSALLLCILFTCFCV. At 715 to 886 the chain is on the cytoplasmic side; it reads TTTKRTVKKC…RTLAKTCVKK (172 aa).

In terms of assembly, binds to JUP/plakoglobin. Expressed in the epidermis and inner root sheaths of hair follicles (at protein level).

The protein resides in the cell membrane. The protein localises to the cell junction. It is found in the desmosome. A component of desmosome cell-cell junctions which are required for positive regulation of cellular adhesion. Required for desmosome adhesion strength between the granular layers of the epidermis, as a result moderates epidermal proliferation and differentiation. Is therefore required to maintain postnatal epidermal barrier function and normal hair follicle morphology into adulthood. This chain is Desmocollin-1 (Dsc1), found in Mus musculus (Mouse).